Consider the following 279-residue polypeptide: Tryptophan 2,3-dioxygenase (279 aa).

Substrate-binding positions include 48–52 (FIIQH), Tyr110, and Arg114. His237 contributes to the heme binding site. Thr251 contributes to the substrate binding site.

It belongs to the tryptophan 2,3-dioxygenase family. In terms of assembly, homotetramer. Requires heme as cofactor.

The catalysed reaction is L-tryptophan + O2 = N-formyl-L-kynurenine. It participates in amino-acid degradation; L-tryptophan degradation via kynurenine pathway; L-kynurenine from L-tryptophan: step 1/2. Its function is as follows. Heme-dependent dioxygenase that catalyzes the oxidative cleavage of the L-tryptophan (L-Trp) pyrrole ring and converts L-tryptophan to N-formyl-L-kynurenine. Catalyzes the oxidative cleavage of the indole moiety. This is Tryptophan 2,3-dioxygenase from Bradyrhizobium diazoefficiens (strain JCM 10833 / BCRC 13528 / IAM 13628 / NBRC 14792 / USDA 110).